We begin with the raw amino-acid sequence, 20 residues long: YHYYNPEENHFCATWDASKP.

One can recognise a Barwin domain in the interval 1 to 20 (YHYYNPEENHFCATWDASKP).

Post-translationally, the N-terminus is blocked.

This is Punein from Punica granatum (Pomegranate).